The sequence spans 122 residues: Large ribosomal subunit protein bL17 (122 aa).

The protein belongs to the bacterial ribosomal protein bL17 family. As to quaternary structure, part of the 50S ribosomal subunit. Contacts protein L32.

The sequence is that of Large ribosomal subunit protein bL17 from Neisseria meningitidis serogroup C / serotype 2a (strain ATCC 700532 / DSM 15464 / FAM18).